The following is a 627-amino-acid chain: Sodium- and chloride-dependent GABA transporter 3 (627 aa).

Residues Met-1–Glu-36 are disordered. Residues Met-1–Glu-53 lie on the Cytoplasmic side of the membrane. The residue at position 21 (Ser-21) is a Phosphoserine. Residues Ala-23–Ala-32 are compositionally biased toward gly residues. The next 3 helical transmembrane spans lie at Phe-54 to Leu-74, Ala-82 to Leu-101, and Gly-126 to Leu-146. The Extracellular segment spans residues Ala-147–Arg-220. 3 N-linked (GlcNAc...) asparagine glycosylation sites follow: Asn-182, Asn-185, and Asn-193. Transmembrane regions (helical) follow at residues Trp-221–Trp-239, Val-248–Ile-265, Ile-301–Tyr-318, Ile-330–Leu-351, Met-384–Leu-403, Leu-433–Thr-451, Gly-468–Ser-488, Trp-509–Val-528, and Ile-548–Ile-566. At Lys-567 to Phe-627 the chain is on the cytoplasmic side.

The protein belongs to the sodium:neurotransmitter symporter (SNF) (TC 2.A.22) family. SLC6A11 subfamily. Brain and retina. Expressed predominantly within neurons. Expressed in the hippocampus (at protein level).

Its subcellular location is the cell membrane. It catalyses the reaction 4-aminobutanoate(out) + chloride(out) + 2 Na(+)(out) = 4-aminobutanoate(in) + chloride(in) + 2 Na(+)(in). It carries out the reaction taurine(out) + chloride(out) + 2 Na(+)(out) = taurine(in) + chloride(in) + 2 Na(+)(in). The enzyme catalyses beta-alanine(out) + chloride(out) + 2 Na(+)(out) = beta-alanine(in) + chloride(in) + 2 Na(+)(in). The catalysed reaction is hypotaurine(out) + chloride(out) + 2 Na(+)(out) = hypotaurine(in) + chloride(in) + 2 Na(+)(in). With respect to regulation, GABA transport is inhibited by beta-alanine. In terms of biological role, mediates sodium- and chloride-dependent transport of gamma-aminobutyric acid (GABA). Can also mediate transport of beta-alanine and to a lower extent that of taurine and hypotaurine. The sequence is that of Sodium- and chloride-dependent GABA transporter 3 (Slc6a11) from Rattus norvegicus (Rat).